The chain runs to 171 residues: Iron-sulfur cluster assembly protein 1 (171 aa).

Residues 1 to 55 constitute a mitochondrion transit peptide; that stretch reads MLRAGGRRLLAPGLRRVLGGGAAAPVAVGGAKAYHERVVDHYENPRNVGSFENDD.

It belongs to the NifU family. In terms of assembly, component of the core Fe-S cluster (ISC) assembly machinery. [2Fe-2S] cluster is required as a cofactor.

The protein resides in the mitochondrion matrix. Its pathway is cofactor biosynthesis; iron-sulfur cluster biosynthesis. Its function is as follows. Scaffold protein for the de novo synthesis of iron-sulfur (Fe-S) clusters within mitochondria, which is required for maturation of both mitochondrial and cytoplasmic [2Fe-2S] and [4Fe-4S] proteins. First, a [2Fe-2S] cluster is transiently assembled on the scaffold protein ISCU (ISU1, ISU2 or ISU3). In a second step, the cluster is released from ISCU, transferred to a glutaredoxin, followed by the formation of mitochondrial [2Fe-2S] proteins, the synthesis of [4Fe-4S] clusters and their target-specific insertion into the recipient apoproteins. Cluster assembly on ISCU depends on the function of the cysteine desulfurase complex NFS1-ISD11, which serves as the sulfur donor for cluster synthesis, the iron-binding protein frataxin as the putative iron donor, and the electron transfer chain comprised of ferredoxin reductase and ferredoxin, which receive their electrons from NADH. The sequence is that of Iron-sulfur cluster assembly protein 1 from Oryza sativa subsp. japonica (Rice).